Here is a 138-residue protein sequence, read N- to C-terminus: Putative pre-16S rRNA nuclease (138 aa).

The protein belongs to the YqgF nuclease family.

Its subcellular location is the cytoplasm. In terms of biological role, could be a nuclease involved in processing of the 5'-end of pre-16S rRNA. The polypeptide is Putative pre-16S rRNA nuclease (Escherichia coli O45:K1 (strain S88 / ExPEC)).